The sequence spans 327 residues: MAKSPVRIAVTGAAGQIAYALVFRIASGALLGPDQPVILHLLDLPQMQGALGGVMMELEDCAFPLLAGMVATDDPKVAFKDIDIGFLVGARPRGKGMERKDLLGANAEIFTVQGRALNEVAKRSARVLVVGNPANTNAYIAMKSAPDLSPDCFSAMIRLDHNRAASMLAAKAGVNVGDVGKLIVWGNHSPTMYPDYRFAEAGGRKLAEAINDEAWNRDVFIPTVGKRGAAVIEARGASSAASAANAAIDQVRDWVVGSDGRWVSMAIPSDGSYGIPEGIMFGVPVTTQGGVVTRVPNLAIDAFAQSRLDITLNELKEEREAIAHLLA.

Residue glycine 12 to alanine 18 coordinates NAD(+). Residues arginine 93 and arginine 99 each contribute to the substrate site. NAD(+) contacts are provided by residues asparagine 106, glutamine 113, and valine 130–asparagine 132. Residues asparagine 132 and arginine 163 each coordinate substrate. Histidine 188 serves as the catalytic Proton acceptor.

The protein belongs to the LDH/MDH superfamily. MDH type 2 family.

The catalysed reaction is (S)-malate + NAD(+) = oxaloacetate + NADH + H(+). Catalyzes the reversible oxidation of malate to oxaloacetate. The polypeptide is Malate dehydrogenase (Acidiphilium cryptum (strain JF-5)).